Reading from the N-terminus, the 182-residue chain is Small ribosomal subunit protein uS4c (182 aa).

Residues 82 to 143 (MRLDNILFRL…KQRSKALIQN (62 aa)) form the S4 RNA-binding domain.

Belongs to the universal ribosomal protein uS4 family. In terms of assembly, part of the 30S ribosomal subunit. Contacts protein S5. The interaction surface between S4 and S5 is involved in control of translational fidelity.

It localises to the plastid. Its subcellular location is the chloroplast. In terms of biological role, one of the primary rRNA binding proteins, it binds directly to 16S rRNA where it nucleates assembly of the body of the 30S subunit. Functionally, with S5 and S12 plays an important role in translational accuracy. The chain is Small ribosomal subunit protein uS4c (rps4) from Isophysis tasmanica.